A 209-amino-acid polypeptide reads, in one-letter code: Regulator of G-protein signaling 1 (209 aa).

The segment at F19–R42 is disordered. Residues K24 to K38 show a composition bias toward basic and acidic residues. Residues S85–L200 form the RGS domain.

In terms of assembly, interacts with GNAI1 and GNAQ. Detected in spleen, lymph node and intestine.

The protein localises to the cell membrane. The protein resides in the cytoplasm. It localises to the cytosol. In terms of biological role, regulates G protein-coupled receptor signaling cascades, including signaling downstream of the N-formylpeptide chemoattractant receptors and leukotriene receptors. Inhibits B cell chemotaxis toward CXCL12. Inhibits signal transduction by increasing the GTPase activity of G protein alpha subunits thereby driving them into their inactive GDP-bound form. The chain is Regulator of G-protein signaling 1 (Rgs1) from Mus musculus (Mouse).